The sequence spans 195 residues: Pyruvoyl-dependent arginine decarboxylase AaxB (195 aa).

Position 53 is a pyruvic acid (Ser) (Ser-53).

This sequence belongs to the pyruvoyl-dependent arginine decarboxylase family. As to quaternary structure, trimer of an alpha-beta dimer. The cofactor is pyruvate.

Its subcellular location is the cytoplasm. It carries out the reaction L-arginine + H(+) = agmatine + CO2. Its function is as follows. Part of the AaxABC system, catalyzes the decarboxylation of L-arginine. The arginine uptake by the bacterium in the macrophage may be a virulence factor against the host innate immune response. The polypeptide is Pyruvoyl-dependent arginine decarboxylase AaxB (aaxB) (Chlamydia muridarum (strain MoPn / Nigg)).